We begin with the raw amino-acid sequence, 188 residues long: Phospholipase A2 inhibitor 31 kDa subunit (188 aa).

8 disulfide bridges follow: cysteine 3–cysteine 27, cysteine 6–cysteine 13, cysteine 20–cysteine 48, cysteine 54–cysteine 75, cysteine 76–cysteine 81, cysteine 99–cysteine 124, cysteine 117–cysteine 146, and cysteine 150–cysteine 172. Asparagine 157 carries an N-linked (GlcNAc...) asparagine glycan.

Belongs to the CNF-like-inhibitor family. Heterodimer with phospholipase A2 inhibitor 25 kDa. In terms of processing, N-glycosylated. Expressed by the liver.

The protein localises to the secreted. In terms of biological role, inhibits the enzymatic activity of phospholipase A2. This chain is Phospholipase A2 inhibitor 31 kDa subunit, found in Naja kaouthia (Monocled cobra).